Here is a 356-residue protein sequence, read N- to C-terminus: Inactive ubiquitin thioesterase OTULINL (356 aa).

Residues 1 to 22 form a disordered region; sequence MAATRSPTRARERERSGAPAAG. A required for membrane binding region spans residues 1–83; that stretch reads MAATRSPTRA…KWWIGYLQRK (83 aa). An OTU domain is found at 128–356; that stretch reads KCVRQVRRDN…NDRHYHIPVF (229 aa).

The protein belongs to the peptidase C65 family. Otulin subfamily. As to quaternary structure, does not bind ubiquitin or ubiquitin-like proteins.

The protein localises to the cytoplasm. Its subcellular location is the endoplasmic reticulum membrane. It is found in the nucleus envelope. In terms of biological role, lacks deubiquitinase activity. In Homo sapiens (Human), this protein is Inactive ubiquitin thioesterase OTULINL.